The chain runs to 79 residues: uncharacterized protein (79 aa).

Residues 1–33 (MRLIIRAIVLLALVWIGLLMSGYGILVGSKVNA) form the signal peptide.

This is an uncharacterized protein from Salmonella typhi.